A 341-amino-acid polypeptide reads, in one-letter code: tRNA N6-adenosine threonylcarbamoyltransferase (341 aa).

Fe cation is bound by residues histidine 113 and histidine 117. Residues 141–145 (LVSGG), aspartate 174, glycine 187, and asparagine 282 contribute to the substrate site. Aspartate 310 lines the Fe cation pocket.

The protein belongs to the KAE1 / TsaD family. It depends on Fe(2+) as a cofactor.

It is found in the cytoplasm. The enzyme catalyses L-threonylcarbamoyladenylate + adenosine(37) in tRNA = N(6)-L-threonylcarbamoyladenosine(37) in tRNA + AMP + H(+). Required for the formation of a threonylcarbamoyl group on adenosine at position 37 (t(6)A37) in tRNAs that read codons beginning with adenine. Is involved in the transfer of the threonylcarbamoyl moiety of threonylcarbamoyl-AMP (TC-AMP) to the N6 group of A37, together with TsaE and TsaB. TsaD likely plays a direct catalytic role in this reaction. This is tRNA N6-adenosine threonylcarbamoyltransferase from Porphyromonas gingivalis (strain ATCC BAA-308 / W83).